The primary structure comprises 313 residues: Ribosomal RNA small subunit methyltransferase H (313 aa).

S-adenosyl-L-methionine contacts are provided by residues Gly-33–His-35, Asp-53, Phe-80, Asp-102, and Gln-109. The disordered stretch occupies residues Ser-291–Arg-313.

Belongs to the methyltransferase superfamily. RsmH family.

The protein localises to the cytoplasm. The catalysed reaction is cytidine(1402) in 16S rRNA + S-adenosyl-L-methionine = N(4)-methylcytidine(1402) in 16S rRNA + S-adenosyl-L-homocysteine + H(+). In terms of biological role, specifically methylates the N4 position of cytidine in position 1402 (C1402) of 16S rRNA. This chain is Ribosomal RNA small subunit methyltransferase H, found in Heliobacterium modesticaldum (strain ATCC 51547 / Ice1).